An 88-amino-acid polypeptide reads, in one-letter code: Putative regulatory protein Ava_1474 (88 aa).

This sequence belongs to the RemA family.

The polypeptide is Putative regulatory protein Ava_1474 (Trichormus variabilis (strain ATCC 29413 / PCC 7937) (Anabaena variabilis)).